The following is a 28-amino-acid chain: Mu-theraphotoxin-Hsp1a (28 aa).

Disulfide bonds link C2–C16, C9–C21, and C15–C25. Asparagine amide is present on N28.

Belongs to the neurotoxin 30 (phrixotoxin) family. As to expression, expressed by the venom gland.

Its subcellular location is the secreted. Functionally, potent and selective inhibitor of Nav1.7/SCN9A sodium channels. Inhibits Nav1.7/SCN9A peak current (IC(50)=13 nM). In vivo, does not induce visible signs of toxicity when intravenously injected into mice. The chain is Mu-theraphotoxin-Hsp1a from Homoeomma sp. (Peruvian tarantula).